We begin with the raw amino-acid sequence, 526 residues long: MAVFPSSGLPRCLLTLILLQLPKLDSAPFDVIGPPEPILAVVGEDAELPCRLSPNASAEHLELRWFRKKVSPAVLVHRDGREQEAEQMPEYRGRATLVQDGIAKGRVALRIRGVRVSDDGEYTCFFREDGSYEEALVHLKVAALGSDPHISMQVQENGEICLECTSVGWYPEPQVQWRTSKGEKFPSTSESRNPDEEGLFTVAASVIIRDTSAKNVSCYIQNLLLGQEKKVEISIPASSLPRLTPWIVAVAVILMVLGLLTIGSIFFTWRLYNERPRERRNEFSSKERLLEELKWKKATLHAVDVTLDPDTAHPHLFLYEDSKSVRLEDSRQKLPEKTERFDSWPCVLGRETFTSGRHYWEVEVGDRTDWAIGVCRENVMKKGFDPMTPENGFWAVELYGNGYWALTPLRTPLPLAGPPRRVGIFLDYESGDISFYNMNDGSDIYTFSNVTFSGPLRPFFCLWSSGKKPLTICPIADGPERVTVIANAQDLSKEIPLSPMGEDSAPRDADTLHSKLIPTQPSQGAP.

The N-terminal stretch at 1-26 (MAVFPSSGLPRCLLTLILLQLPKLDS) is a signal peptide. Ig-like V-type domains are found at residues 27 to 138 (APFD…ALVH) and 148 to 234 (PHIS…VEIS). The Extracellular segment spans residues 27-242 (APFDVIGPPE…ISIPASSLPR (216 aa)). Cystine bridges form between cysteine 50–cysteine 124 and cysteine 164–cysteine 218. Asparagine 55 and asparagine 215 each carry an N-linked (GlcNAc...) asparagine glycan. Residues 243–269 (LTPWIVAVAVILMVLGLLTIGSIFFTW) form a helical membrane-spanning segment. Residues 270-526 (RLYNERPRER…IPTQPSQGAP (257 aa)) lie on the Cytoplasmic side of the membrane. Residues 285 to 479 (SKERLLEELK…LTICPIADGP (195 aa)) form the B30.2/SPRY domain. A disordered region spans residues 495–526 (IPLSPMGEDSAPRDADTLHSKLIPTQPSQGAP). Positions 504-513 (SAPRDADTLH) are enriched in basic and acidic residues. The span at 517 to 526 (IPTQPSQGAP) shows a compositional bias: polar residues.

The protein belongs to the immunoglobulin superfamily. BTN/MOG family. As to quaternary structure, seems to associate with xanthine dehydrogenase/oxidase. N-glycosylated.

Its subcellular location is the membrane. The protein localises to the secreted. Its function is as follows. May function in the secretion of milk-fat droplets. May act as a specific membrane-associated receptor for the association of cytoplasmic droplets with the apical plasma membrane. Inhibits the proliferation of CD4 and CD8 T-cells activated by anti-CD3 antibodies, T-cell metabolism and IL2 and IFNG secretion. This chain is Butyrophilin subfamily 1 member A1 (BTN1A1), found in Homo sapiens (Human).